Reading from the N-terminus, the 292-residue chain is MNAFDPDIAEDAGSDGCHPLFRDVPTTVEFNKLRKRLLRLTRQAIEDFSMVKPGERWMVCLSGGKDSYGLLALLLDLKWRGLLPVELLAVNLDQGQPNFPKHILPDFLNRYEIEHRIEYQDTYSIVTDKLPETSTYCSLCSRLRRGNLYRIAREEGCSAIVLGHHREDILETFFMNLFHGGRLAAMPPKLLNDEGDLMVFRPLAYAAEDDLEKFATAMQFPIIPCDLCGSQEGLQRNAMKAMLTDIEKRMPGRKDTMIRAMTNVRPSHLLDRKLFDFAGLMLNGEGEGDHAV.

The PP-loop motif signature appears at 62 to 67 (SGGKDS). C137, C140, and C228 together coordinate [4Fe-4S] cluster.

The protein belongs to the TtcA family. In terms of assembly, homodimer. Requires Mg(2+) as cofactor. It depends on [4Fe-4S] cluster as a cofactor.

It is found in the cytoplasm. The enzyme catalyses cytidine(32) in tRNA + S-sulfanyl-L-cysteinyl-[cysteine desulfurase] + AH2 + ATP = 2-thiocytidine(32) in tRNA + L-cysteinyl-[cysteine desulfurase] + A + AMP + diphosphate + H(+). It functions in the pathway tRNA modification. Its function is as follows. Catalyzes the ATP-dependent 2-thiolation of cytidine in position 32 of tRNA, to form 2-thiocytidine (s(2)C32). The sulfur atoms are provided by the cysteine/cysteine desulfurase (IscS) system. The polypeptide is tRNA-cytidine(32) 2-sulfurtransferase (Brucella anthropi (strain ATCC 49188 / DSM 6882 / CCUG 24695 / JCM 21032 / LMG 3331 / NBRC 15819 / NCTC 12168 / Alc 37) (Ochrobactrum anthropi)).